The chain runs to 423 residues: Adenylosuccinate synthetase (423 aa).

GTP-binding positions include 12–18 and 40–42; these read GDEGKGK and GHT. The active-site Proton acceptor is the D13. Positions 13 and 40 each coordinate Mg(2+). IMP is bound by residues 13–16, 38–41, T129, R143, Q224, T239, and R303; these read DEGK and NAGH. H41 (proton donor) is an active-site residue. 299-305 serves as a coordination point for substrate; that stretch reads SVTGRQR. GTP contacts are provided by residues R305, 331 to 333, and 412 to 414; these read KGD and SVG.

Belongs to the adenylosuccinate synthetase family. Homodimer. It depends on Mg(2+) as a cofactor.

It is found in the cytoplasm. The catalysed reaction is IMP + L-aspartate + GTP = N(6)-(1,2-dicarboxyethyl)-AMP + GDP + phosphate + 2 H(+). Its pathway is purine metabolism; AMP biosynthesis via de novo pathway; AMP from IMP: step 1/2. In terms of biological role, plays an important role in the de novo pathway of purine nucleotide biosynthesis. Catalyzes the first committed step in the biosynthesis of AMP from IMP. The polypeptide is Adenylosuccinate synthetase (Flavobacterium psychrophilum (strain ATCC 49511 / DSM 21280 / CIP 103535 / JIP02/86)).